Here is a 375-residue protein sequence, read N- to C-terminus: Tyrosine--tRNA ligase (375 aa).

Y37, Y168, Q172, D175, and Q190 together coordinate L-tyrosine. The 'KMSKS' region motif lies at 251 to 255 (KMSKS). K254 serves as a coordination point for ATP.

This sequence belongs to the class-I aminoacyl-tRNA synthetase family. TyrS type 4 subfamily. In terms of assembly, homodimer.

The protein localises to the cytoplasm. It carries out the reaction tRNA(Tyr) + L-tyrosine + ATP = L-tyrosyl-tRNA(Tyr) + AMP + diphosphate + H(+). Its function is as follows. Catalyzes the attachment of tyrosine to tRNA(Tyr) in a two-step reaction: tyrosine is first activated by ATP to form Tyr-AMP and then transferred to the acceptor end of tRNA(Tyr). The sequence is that of Tyrosine--tRNA ligase from Thermococcus sibiricus (strain DSM 12597 / MM 739).